We begin with the raw amino-acid sequence, 72 residues long: VKRPMNAFMVWSQHERRKIMDQWPDMHNAEISKRLGRRWQLLQDSEKIPFVKGAERLRLKHMADYADYKYRP.

The HMG box DNA-binding region spans 1–69 (VKRPMNAFMV…KHMADYADYK (69 aa)).

It is found in the nucleus. The polypeptide is SRY-related protein ADW2 (Alligator mississippiensis (American alligator)).